The primary structure comprises 425 residues: UPF0597 protein VF_0641 (425 aa).

The protein belongs to the UPF0597 family.

The chain is UPF0597 protein VF_0641 from Aliivibrio fischeri (strain ATCC 700601 / ES114) (Vibrio fischeri).